A 187-amino-acid polypeptide reads, in one-letter code: CASP-like protein 3A2 (187 aa).

The Cytoplasmic portion of the chain corresponds to 1 to 24 (MTSNGEGGEVVAKRRRKGIKELVQ). Residues 25-45 (VALRGGCLAASATAMAVMLTA) traverse the membrane as a helical segment. Residues 46 to 71 (TEEGVADIYGFKLTLSSNWSFSPSYQ) are Extracellular-facing. Asparagine 63 is a glycosylation site (N-linked (GlcNAc...) asparagine). Residues 72–92 (YVVGACAGTVLYSLLQLCLGV) form a helical membrane-spanning segment. Residues 93-107 (YRLVTGSPITPSRFQ) are Cytoplasmic-facing. A helical membrane pass occupies residues 108–128 (AWLCFTSDQLFCYLMMSAGSA). Residues 129–162 (GSGVTNLNKTGIRHTPLPDFCKTLSSFCNHVALS) lie on the Extracellular side of the membrane. An N-linked (GlcNAc...) asparagine glycan is attached at asparagine 136. A helical transmembrane segment spans residues 163-183 (LLLVFLSFIFLASSSFFTVLV). The Cytoplasmic portion of the chain corresponds to 184 to 187 (LSTP).

The protein belongs to the Casparian strip membrane proteins (CASP) family. Homodimer and heterodimers.

Its subcellular location is the cell membrane. In Arabidopsis thaliana (Mouse-ear cress), this protein is CASP-like protein 3A2.